Here is a 142-residue protein sequence, read N- to C-terminus: Nucleoside diphosphate kinase (142 aa).

ATP is bound by residues Lys11, Phe59, Arg87, Thr93, Arg104, and Asn114. Residue His117 is the Pros-phosphohistidine intermediate of the active site.

Belongs to the NDK family. The cofactor is Mg(2+).

The protein localises to the cytoplasm. The enzyme catalyses a 2'-deoxyribonucleoside 5'-diphosphate + ATP = a 2'-deoxyribonucleoside 5'-triphosphate + ADP. It carries out the reaction a ribonucleoside 5'-diphosphate + ATP = a ribonucleoside 5'-triphosphate + ADP. Major role in the synthesis of nucleoside triphosphates other than ATP. The ATP gamma phosphate is transferred to the NDP beta phosphate via a ping-pong mechanism, using a phosphorylated active-site intermediate. The protein is Nucleoside diphosphate kinase of Hyperthermus butylicus (strain DSM 5456 / JCM 9403 / PLM1-5).